Reading from the N-terminus, the 340-residue chain is GTP 3',8-cyclase (340 aa).

The Radical SAM core domain occupies 20-246 (RFERQYVYLR…PKALSDGPAK (227 aa)). Arg29 contributes to the GTP binding site. Residues Cys36 and Cys40 each contribute to the [4Fe-4S] cluster site. Tyr42 is a binding site for S-adenosyl-L-methionine. Cys43 serves as a coordination point for [4Fe-4S] cluster. Arg79 contacts GTP. Gly83 lines the S-adenosyl-L-methionine pocket. Thr110 contacts GTP. Residue Ser134 participates in S-adenosyl-L-methionine binding. Lys171 provides a ligand contact to GTP. Met205 serves as a coordination point for S-adenosyl-L-methionine. Residues Cys268 and Cys271 each contribute to the [4Fe-4S] cluster site. A GTP-binding site is contributed by 273-275 (RLR). [4Fe-4S] cluster is bound at residue Cys285.

This sequence belongs to the radical SAM superfamily. MoaA family. Monomer and homodimer. [4Fe-4S] cluster serves as cofactor.

The catalysed reaction is GTP + AH2 + S-adenosyl-L-methionine = (8S)-3',8-cyclo-7,8-dihydroguanosine 5'-triphosphate + 5'-deoxyadenosine + L-methionine + A + H(+). The protein operates within cofactor biosynthesis; molybdopterin biosynthesis. Catalyzes the cyclization of GTP to (8S)-3',8-cyclo-7,8-dihydroguanosine 5'-triphosphate. This Actinobacillus pleuropneumoniae serotype 3 (strain JL03) protein is GTP 3',8-cyclase.